The primary structure comprises 475 residues: Trifunctional enzyme subunit beta, mitochondrial (475 aa).

The transit peptide at 1 to 34 (MTTILTCPFKKLPTTSKWALRFAIRPLSCSSQLR) directs the protein to the mitochondrion. The residue at position 73 (Lys73) is an N6-acetyllysine; alternate. Lys73 is subject to N6-succinyllysine; alternate. The active-site Acyl-thioester intermediate is the Cys139. An intramembrane segment occupies 174–221 (IRHSRKMRKLMLDLNKAKSMGQRLSLISKFRLNFLAPELPAVAEFSTS). Lys189 carries the post-translational modification N6-acetyllysine; alternate. The residue at position 189 (Lys189) is an N6-succinyllysine; alternate. Lys191, Lys273, and Lys292 each carry N6-succinyllysine. Position 294 is an N6-acetyllysine; alternate (Lys294). Lys294 is subject to N6-succinyllysine; alternate. Lys299 carries the post-translational modification N6-acetyllysine. At Lys333 the chain carries N6-acetyllysine; alternate. Lys333 carries the post-translational modification N6-succinyllysine; alternate. N6-acetyllysine occurs at positions 349 and 362. The active-site Proton donor/acceptor is Cys459.

This sequence belongs to the thiolase-like superfamily. Thiolase family. As to quaternary structure, heterotetramer of 2 alpha/HADHA and 2 beta/HADHB subunits; forms the mitochondrial trifunctional enzyme. Also purified as higher order heterooligomers including a 4 alpha/HADHA and 4 beta/HADHB heterooligomer which physiological significance remains unclear. The mitochondrial trifunctional enzyme interacts with MTLN. Interacts with RSAD2/viperin.

It is found in the mitochondrion. The protein resides in the mitochondrion inner membrane. The protein localises to the mitochondrion outer membrane. It localises to the endoplasmic reticulum. It catalyses the reaction an acyl-CoA + acetyl-CoA = a 3-oxoacyl-CoA + CoA. The enzyme catalyses butanoyl-CoA + acetyl-CoA = 3-oxohexanoyl-CoA + CoA. The catalysed reaction is hexanoyl-CoA + acetyl-CoA = 3-oxooctanoyl-CoA + CoA. It carries out the reaction octanoyl-CoA + acetyl-CoA = 3-oxodecanoyl-CoA + CoA. It catalyses the reaction decanoyl-CoA + acetyl-CoA = 3-oxododecanoyl-CoA + CoA. The enzyme catalyses dodecanoyl-CoA + acetyl-CoA = 3-oxotetradecanoyl-CoA + CoA. The catalysed reaction is tetradecanoyl-CoA + acetyl-CoA = 3-oxohexadecanoyl-CoA + CoA. The protein operates within lipid metabolism; fatty acid beta-oxidation. Its function is as follows. Mitochondrial trifunctional enzyme catalyzes the last three of the four reactions of the mitochondrial beta-oxidation pathway. The mitochondrial beta-oxidation pathway is the major energy-producing process in tissues and is performed through four consecutive reactions breaking down fatty acids into acetyl-CoA. Among the enzymes involved in this pathway, the trifunctional enzyme exhibits specificity for long-chain fatty acids. Mitochondrial trifunctional enzyme is a heterotetrameric complex composed of two proteins, the trifunctional enzyme subunit alpha/HADHA carries the 2,3-enoyl-CoA hydratase and the 3-hydroxyacyl-CoA dehydrogenase activities, while the trifunctional enzyme subunit beta/HADHB described here bears the 3-ketoacyl-CoA thiolase activity. This is Trifunctional enzyme subunit beta, mitochondrial (HADHB) from Macaca fascicularis (Crab-eating macaque).